We begin with the raw amino-acid sequence, 559 residues long: Protein GRAVITROPIC IN THE LIGHT 1 (559 aa).

The tract at residues 107 to 127 (AVNRREEYDTEEEENEEEGEI) is disordered. The span at 114–127 (YDTEEEENEEEGEI) shows a compositional bias: acidic residues.

Its function is as follows. Required for red (R) and far red (FR) light-induced and phytochrome-mediated deregulation of negative gravitropism leading to randomization of hypocotyl growth orientation. This is Protein GRAVITROPIC IN THE LIGHT 1 from Arabidopsis thaliana (Mouse-ear cress).